Here is a 178-residue protein sequence, read N- to C-terminus: Large ribosomal subunit protein uL6 (178 aa).

It belongs to the universal ribosomal protein uL6 family. Part of the 50S ribosomal subunit.

Its function is as follows. This protein binds to the 23S rRNA, and is important in its secondary structure. It is located near the subunit interface in the base of the L7/L12 stalk, and near the tRNA binding site of the peptidyltransferase center. This Streptococcus pneumoniae (strain 70585) protein is Large ribosomal subunit protein uL6.